Reading from the N-terminus, the 298-residue chain is N-acetylmuramic acid 6-phosphate etherase (298 aa).

In terms of domain architecture, SIS spans 55-218; the sequence is IHTQVSGGGR…STGLMIKSGK (164 aa). The active-site Proton donor is Glu83. Residue Glu114 is part of the active site.

Belongs to the GCKR-like family. MurNAc-6-P etherase subfamily. Homodimer.

It carries out the reaction N-acetyl-D-muramate 6-phosphate + H2O = N-acetyl-D-glucosamine 6-phosphate + (R)-lactate. It functions in the pathway amino-sugar metabolism; 1,6-anhydro-N-acetylmuramate degradation. The protein operates within amino-sugar metabolism; N-acetylmuramate degradation. It participates in cell wall biogenesis; peptidoglycan recycling. Its function is as follows. Specifically catalyzes the cleavage of the D-lactyl ether substituent of MurNAc 6-phosphate, producing GlcNAc 6-phosphate and D-lactate. Together with AnmK, is also required for the utilization of anhydro-N-acetylmuramic acid (anhMurNAc) either imported from the medium or derived from its own cell wall murein, and thus plays a role in cell wall recycling. The polypeptide is N-acetylmuramic acid 6-phosphate etherase (Escherichia coli O1:K1 / APEC).